Here is a 339-residue protein sequence, read N- to C-terminus: 1-aminocyclopropane-1-carboxylate deaminase (339 aa).

Lys-52 is modified (N6-(pyridoxal phosphate)lysine). Ser-79 serves as the catalytic Nucleophile.

The protein belongs to the ACC deaminase/D-cysteine desulfhydrase family. As to quaternary structure, homotrimer. It depends on pyridoxal 5'-phosphate as a cofactor.

It catalyses the reaction 1-aminocyclopropane-1-carboxylate + H2O = 2-oxobutanoate + NH4(+). Catalyzes a cyclopropane ring-opening reaction, the irreversible conversion of 1-aminocyclopropane-1-carboxylate (ACC) to ammonia and alpha-ketobutyrate. Allows growth on ACC as a nitrogen source. This is 1-aminocyclopropane-1-carboxylate deaminase from Rhizobium leguminosarum bv. viciae.